The primary structure comprises 506 residues: Zinc finger and SCAN domain containing protein 4D (506 aa).

Positions 37-119 (SAQLNFSPSN…RFMESLTDEC (83 aa)) constitute an SCAN box domain. The interval 238–264 (SQGNSSHHVDFRSAPTPADVPMEEQPK) is disordered. 4 C2H2-type zinc fingers span residues 395–417 (FKCEECSRMFKHARSLSSHQRTH), 424–446 (LLCVTCQKMFKRVSDRRTHEIIH), 452–474 (FKCSTCEKSFSHKTNLKSHEMIH), and 480–503 (YVCSLCSRRFRQSSTYHRHLRNYH).

As to expression, highly expressed at the 2-cell stage but its expression is rapidly turned off.

It is found in the nucleus. The protein localises to the chromosome. The protein resides in the telomere. Functionally, transcription factor required to regulate early development. Binds telomeres and plays a key role in genomic stability by regulating telomere elongation. Acts as an activator of spontaneous telomere sister chromatid exchange (T-SCE) and telomere elongation. The polypeptide is Zinc finger and SCAN domain containing protein 4D (Zscan4d) (Mus musculus (Mouse)).